Reading from the N-terminus, the 61-residue chain is MDPNCSCATGVSCTCADSCKCKECKCTSCKKSCCSCCPVGCAKCAQGCVCKGASEKCNCCA.

M1 carries the N-acetylmethionine modification. The beta stretch occupies residues 1-29 (MDPNCSCATGVSCTCADSCKCKECKCTSC). 20 residues coordinate a divalent metal cation: C5, C7, C13, C15, C19, C21, C24, C26, C29, C33, C34, C36, C37, C41, C44, C48, C50, C57, C59, and C60. Residues 30-61 (KKSCCSCCPVGCAKCAQGCVCKGASEKCNCCA) are alpha.

The protein belongs to the metallothionein superfamily. Type 1 family.

Its function is as follows. Metallothioneins have a high content of cysteine residues that bind various heavy metals; these proteins are transcriptionally regulated by both heavy metals and glucocorticoids. The protein is Metallothionein-1 (MT1) of Chlorocebus aethiops (Green monkey).